The following is a 252-amino-acid chain: ATP synthase subunit a (252 aa).

A run of 6 helical transmembrane segments spans residues 29 to 49, 87 to 107, 117 to 137, 146 to 166, 188 to 208, and 211 to 231; these read FTNS…FLFL, FFPL…LGLF, IIVT…YGFM, LFVP…IEVI, ITLK…AVGV, and SILP…VAFL.

It belongs to the ATPase A chain family. In terms of assembly, F-type ATPases have 2 components, CF(1) - the catalytic core - and CF(0) - the membrane proton channel. CF(1) has five subunits: alpha(3), beta(3), gamma(1), delta(1), epsilon(1). CF(0) has three main subunits: a(1), b(2) and c(9-12). The alpha and beta chains form an alternating ring which encloses part of the gamma chain. CF(1) is attached to CF(0) by a central stalk formed by the gamma and epsilon chains, while a peripheral stalk is formed by the delta and b chains.

The protein resides in the cell inner membrane. Functionally, key component of the proton channel; it plays a direct role in the translocation of protons across the membrane. This is ATP synthase subunit a from Mesorhizobium japonicum (strain LMG 29417 / CECT 9101 / MAFF 303099) (Mesorhizobium loti (strain MAFF 303099)).